Consider the following 1069-residue polypeptide: MALDGELGEQEEEKKKKKKKKRKKKKEEEEEEEGAEKSSSPFAAAMGEDDAALRAGSRGLSDPWADSVGVRPRTTERHIAVHKRLVLAFAVSLVALLAVTMLAVLLSLRFDECGASATPGADGGPSGFPERGGNGSLPGSARRNHHAGGDSWQPEAGGVASPGTTSAQPPSEEEREPWEPWTQLRLSGHLKPLHYNLMLTAFMENFTFSGEVNVEIACRNATRYVVLHASRVAVEKVQLAEDRAFGAVPVAGFFLYPQTQVLVVVLNRTLDAQRNYNLKIIYNALIENELLGFFRSSYVLHGERRFLGVTQFSPTHARKAFPCFDEPIYKATFKISIKHQATYLSLSNMPVETSVFEEDGWVTDHFSQTPLMSTYYLAWAICNFTYRETTTKSGVVVRLYARPDAIRRGSGDYALHITKRLIEFYEDYFKVPYSLPKLDLLAVPKHPYAAMENWGLSIFVEQRILLDPSVSSISYLLDVTMVIVHEICHQWFGDLVTPVWWEDVWLKEGFAHYFEFVGTDYLYPGWNMEKQRFLTDVLHEVMLLDGLASSHPVSQEVLQATDIDRVFDWIAYKKGAALIRMLANFMGHSVFQRGLQDYLTIHKYGNAARNDLWNTLSEALKRNGKYVNIQEVMDQWTLQMGYPVITILGNTTAENRIIITQQHFIYDISAKTKALKLQNNSYLWQIPLTIVVGNRSHVSSEAIIWVSNKSEHHRITYLDKGSWLLGNINQTGYFRVNYDLRNWRLLIDQLIRNHEVLSVSNRAGLIDDAFSLARAGYLPQNIPLEIIRYLSEEKDFLPWHAASRALYPLDKLLDRMENYNIFNEYILKQVATTYIKLGWPKNNFNGSLVQASYQHEELRREVIMLACSFGNKHCHQQASTLISDWISSNRNRIPLNVRDIVYCTGVSLLDEDVWEFIWMKFHSTTAVSEKKILLEALTCSDDRNLLNRLLNLSLNSEVVLDQDAIDVIIHVARNPHGRDLAWKFFRDKWKILNTRYGEALFMNSKLISGVTEFLNTEGELKELKNFMKNYDGVAAASFSRAVETVEANVRWKMLYQDELFQWLGKALRH.

Over residues 1 to 11 (MALDGELGEQE) the composition is skewed to acidic residues. The segment at 1–46 (MALDGELGEQEEEKKKKKKKKRKKKKEEEEEEEGAEKSSSPFAAAM) is disordered. Topologically, residues 1–85 (MALDGELGEQ…ERHIAVHKRL (85 aa)) are cytoplasmic. Residues 15–25 (KKKKKKKRKKK) show a composition bias toward basic residues. Residues 86–106 (VLAFAVSLVALLAVTMLAVLL) form a helical; Signal-anchor for type II membrane protein membrane-spanning segment. At 107–1069 (SLRFDECGAS…FQWLGKALRH (963 aa)) the chain is on the extracellular side. The disordered stretch occupies residues 117-179 (ATPGADGGPS…PSEEEREPWE (63 aa)). Residues 121–136 (ADGGPSGFPERGGNGS) are compositionally biased toward gly residues. Residues Asn-134, Asn-205, Asn-220, Asn-267, and Asn-383 are each glycosylated (N-linked (GlcNAc...) asparagine). 449–453 (AAMEN) is a binding site for substrate. A Zn(2+)-binding site is contributed by His-485. Glu-486 serves as the catalytic Proton acceptor. 2 residues coordinate Zn(2+): His-489 and Glu-508. Asn-650, Asn-679, Asn-694, Asn-708, Asn-729, Asn-845, and Asn-951 each carry an N-linked (GlcNAc...) asparagine glycan.

Belongs to the peptidase M1 family. As to quaternary structure, homodimer; disulfide-linked. The cofactor is Zn(2+). Predominantly expressed in brain.

The protein resides in the membrane. It catalyses the reaction Release of the N-terminal pyroglutamyl group from pGlu-|-His-Xaa tripeptides and pGlu-|-His-Xaa-Gly tetrapeptides.. In terms of biological role, specific inactivation of TRH after its release. The protein is Thyrotropin-releasing hormone-degrading ectoenzyme (TRHDE) of Homo sapiens (Human).